A 904-amino-acid chain; its full sequence is Auxilin-related protein 1 (904 aa).

Disordered regions lie at residues 46-99 (AAGK…FDYD), 150-731 (SSIS…NLRK), and 749-776 (SASQ…RHQR). Positions 59-69 (DPGRDGDDLLF) are enriched in basic and acidic residues. Over residues 81 to 95 (YGSSSGDSRSPSAPA) the composition is skewed to low complexity. A compositionally biased stretch (basic and acidic residues) spans 178–188 (KGADSDREEKG). The segment covering 201-215 (RTSSPPSKRTTSETT) has biased composition (low complexity). The segment covering 232–244 (VEEDPFVVLEESE) has biased composition (acidic residues). Positions 245-271 (STPREPSRTDPLDDIGKFNSRKTDHSS) are enriched in basic and acidic residues. A compositionally biased stretch (pro residues) spans 370–383 (SAPPPTRPPPPRPT). Residues 394-419 (SIPTSAYHSHVPSSGRASVNSPTASQ) show a composition bias toward polar residues. Residues 456–663 (SAAAMKDAMD…AAAEARGRAA (208 aa)) are a coiled coil. 2 stretches are compositionally biased toward basic and acidic residues: residues 462–570 (DAMD…EAHA) and 581–660 (TDAR…EARG). Residues 619–640 (REKAEKAAAEAKERANAEAREK) form the R domain. A compositionally biased stretch (low complexity) spans 661–673 (RAAAQAKAKQQQE). Polar residues predominate over residues 674–697 (NTNDLDSFFSSISRPNSAPRQRTN). Positions 762–804 (ETEERRRARLERHQRTQERAAKALAEKNERDLQVQREQVEKDR) form a coiled coil. Basic and acidic residues predominate over residues 764 to 776 (EERRRARLERHQR). The 66-residue stretch at 839 to 904 (CGWQPVSLTD…WNKFNSEELF (66 aa)) folds into the J domain.

Interacts with SH3P1.

The protein resides in the cell membrane. Its subcellular location is the golgi apparatus. It is found in the trans-Golgi network. The protein localises to the endoplasmic reticulum. It localises to the cytoplasmic vesicle. Its function is as follows. Promotes uncoating of clathrin-coated vesicles. May interact directly with clathrin. The chain is Auxilin-related protein 1 from Arabidopsis thaliana (Mouse-ear cress).